We begin with the raw amino-acid sequence, 177 residues long: Nucleoside triphosphate/diphosphate phosphatase (177 aa).

Arginine 23 functions as the Proton donor in the catalytic mechanism. Mg(2+) is bound by residues asparagine 87, aspartate 103, aspartate 105, aspartate 107, aspartate 120, and glutamate 123.

This sequence belongs to the Ntdp family. The cofactor is Mg(2+).

The enzyme catalyses a ribonucleoside 5'-triphosphate + H2O = a ribonucleoside 5'-diphosphate + phosphate + H(+). It carries out the reaction a ribonucleoside 5'-diphosphate + H2O = a ribonucleoside 5'-phosphate + phosphate + H(+). Has nucleoside phosphatase activity towards nucleoside triphosphates and nucleoside diphosphates. The polypeptide is Nucleoside triphosphate/diphosphate phosphatase (Streptococcus equi subsp. zooepidemicus (strain MGCS10565)).